Reading from the N-terminus, the 286-residue chain is Polyamine aminopropyltransferase (286 aa).

The region spanning 5–238 (KTWHEKLYCH…GVMVFAWGTN (234 aa)) is the PABS domain. The spermidine site is built by His64 and Asp88. Residues Glu108 and 140 to 141 (DG) contribute to the S-methyl-5'-thioadenosine site. The active-site Proton acceptor is Asp158. 158 to 161 (DSTD) is a binding site for spermidine.

It belongs to the spermidine/spermine synthase family. As to quaternary structure, homodimer or homotetramer.

The protein localises to the cytoplasm. The enzyme catalyses S-adenosyl 3-(methylsulfanyl)propylamine + putrescine = S-methyl-5'-thioadenosine + spermidine + H(+). The protein operates within amine and polyamine biosynthesis; spermidine biosynthesis; spermidine from putrescine: step 1/1. Catalyzes the irreversible transfer of a propylamine group from the amino donor S-adenosylmethioninamine (decarboxy-AdoMet) to putrescine (1,4-diaminobutane) to yield spermidine. The sequence is that of Polyamine aminopropyltransferase from Buchnera aphidicola subsp. Acyrthosiphon pisum (strain 5A).